A 111-amino-acid chain; its full sequence is UPF0060 membrane protein Aave_2845 (111 aa).

A run of 4 helical transmembrane segments spans residues 7–27 (FLLY…PWLW), 33–53 (SAWL…LLTL), 63–83 (AAYG…VDGI), and 90–110 (LAGA…PRGA).

The protein belongs to the UPF0060 family.

The protein localises to the cell inner membrane. This Paracidovorax citrulli (strain AAC00-1) (Acidovorax citrulli) protein is UPF0060 membrane protein Aave_2845.